The primary structure comprises 490 residues: Colicin-10 (490 aa).

The segment covering 1–20 (MDKVTDNSPDVESTESTEGS) has biased composition (polar residues). Disordered stretches follow at residues 1–29 (MDKV…VDTG) and 146–171 (QKAR…EIAR). A compositionally biased stretch (basic and acidic residues) spans 146–170 (QKAREEAEAAEKALREAERQRDEIA). Residues 447–467 (IVALMFSFIVGAPLGFWGIAI) form a helical membrane-spanning segment.

This sequence belongs to the channel forming colicin family.

It is found in the host membrane. In terms of biological role, this colicin is a channel-forming colicin. This class of transmembrane toxins depolarize the cytoplasmic membrane, leading to dissipation of cellular energy. Colicins are polypeptide toxins produced by and active against E.coli and closely related bacteria. In Escherichia coli, this protein is Colicin-10 (cta).